The following is a 223-amino-acid chain: Sigma non-opioid intracellular receptor 1 (223 aa).

At 1–7 (MAVLSSR) the chain is on the lumenal side. Residues 8 to 29 (AMRAALGLAVLAVVIQLLRTWL) traverse the membrane as a helical segment. Over 30-223 (SSKSYLFNQK…HTYLSELGLS (194 aa)) the chain is Cytoplasmic. The interval 98–105 (SLTEYILL) is important for ligand-binding. Residues 176-223 (FIPSTMGFALADTIFSTQDFCTLFYTFRIYARCLLLETHTYLSELGLS) form a C-terminal hydrophobic region region.

This sequence belongs to the ERG2 family. Homotrimer.

The protein localises to the nucleus inner membrane. Its subcellular location is the nucleus outer membrane. The protein resides in the nucleus envelope. It localises to the cytoplasmic vesicle. It is found in the endoplasmic reticulum membrane. The protein localises to the membrane. Its function is as follows. May function in lipid transport from the endoplasmic reticulum and be involved in a wide array of cellular functions probably through regulation of the biogenesis of lipid microdomains at the plasma membrane. May regulate calcium efflux at the endoplasmic reticulum. The chain is Sigma non-opioid intracellular receptor 1 (SIGMAR1) from Taricha granulosa (Roughskin newt).